The following is a 370-amino-acid chain: Actin-related protein 2/3 complex subunit 1A-B (370 aa).

6 WD repeats span residues 6–45, 50–89, 140–179, 202–241, 244–284, and 322–365; these read FLLE…WVKC, EHNG…WKPT, PIRS…VDEK, SSGG…SVSQ, TEFL…TFVS, and LHQN…SYIQ.

Belongs to the WD repeat ARPC1 family. In terms of assembly, component of the Arp2/3 complex.

The protein localises to the cytoplasm. It is found in the cytoskeleton. It localises to the nucleus. In terms of biological role, probably functions as a component of the Arp2/3 complex which is involved in regulation of actin polymerization and together with an activating nucleation-promoting factor (NPF) mediates the formation of branched actin networks. In addition to its role in the cytoplasmic cytoskeleton, the Arp2/3 complex also promotes actin polymerization in the nucleus, thereby regulating gene transcription and repair of damaged DNA. This is Actin-related protein 2/3 complex subunit 1A-B (arpc1a-b) from Xenopus laevis (African clawed frog).